We begin with the raw amino-acid sequence, 21 residues long: Antimicrobial peptide scolopin-1 (21 aa).

Expressed by the venom gland.

It localises to the secreted. In terms of biological role, antimicrobial peptide against both Gram-positive, -negative and yeast. Also induces histamine release by mast cells and shows moderate hemolytic activities against both human and rabbit red cells. This chain is Antimicrobial peptide scolopin-1, found in Scolopendra mutilans (Chinese red-headed centipede).